The sequence spans 284 residues: L-ribulose-5-phosphate 3-epimerase UlaE (284 aa).

It belongs to the L-ribulose-5-phosphate 3-epimerase family.

The enzyme catalyses L-ribulose 5-phosphate = L-xylulose 5-phosphate. Its pathway is cofactor degradation; L-ascorbate degradation; D-xylulose 5-phosphate from L-ascorbate: step 3/4. Its function is as follows. Catalyzes the isomerization of L-xylulose-5-phosphate to L-ribulose-5-phosphate. Is involved in the anaerobic L-ascorbate utilization. This is L-ribulose-5-phosphate 3-epimerase UlaE from Escherichia coli (strain SMS-3-5 / SECEC).